Consider the following 180-residue polypeptide: dCTP deaminase (180 aa).

Residues 101–106 and Asp117 each bind dCTP; that span reads KSSFAR. Glu127 functions as the Proton donor/acceptor in the catalytic mechanism. 2 residues coordinate dCTP: Tyr159 and Gln168.

This sequence belongs to the dCTP deaminase family. In terms of assembly, homotrimer.

It carries out the reaction dCTP + H2O + H(+) = dUTP + NH4(+). It participates in pyrimidine metabolism; dUMP biosynthesis; dUMP from dCTP (dUTP route): step 1/2. Its function is as follows. Catalyzes the deamination of dCTP to dUTP. The protein is dCTP deaminase of Ignicoccus hospitalis (strain KIN4/I / DSM 18386 / JCM 14125).